A 321-amino-acid chain; its full sequence is Beta-ketoacyl-[acyl-carrier-protein] synthase III (321 aa).

Catalysis depends on residues C115 and H248. The ACP-binding stretch occupies residues 249 to 253; it reads QANIR. N278 is a catalytic residue.

The protein belongs to the thiolase-like superfamily. FabH family. In terms of assembly, homodimer.

It localises to the cytoplasm. It catalyses the reaction malonyl-[ACP] + acetyl-CoA + H(+) = 3-oxobutanoyl-[ACP] + CO2 + CoA. The protein operates within lipid metabolism; fatty acid biosynthesis. In terms of biological role, catalyzes the condensation reaction of fatty acid synthesis by the addition to an acyl acceptor of two carbons from malonyl-ACP. Catalyzes the first condensation reaction which initiates fatty acid synthesis and may therefore play a role in governing the total rate of fatty acid production. Possesses both acetoacetyl-ACP synthase and acetyl transacylase activities. Its substrate specificity determines the biosynthesis of branched-chain and/or straight-chain of fatty acids. This is Beta-ketoacyl-[acyl-carrier-protein] synthase III from Azoarcus sp. (strain BH72).